Here is a 164-residue protein sequence, read N- to C-terminus: Transcription antitermination protein NusB (164 aa).

Belongs to the NusB family.

In terms of biological role, involved in transcription antitermination. Required for transcription of ribosomal RNA (rRNA) genes. Binds specifically to the boxA antiterminator sequence of the ribosomal RNA (rrn) operons. The chain is Transcription antitermination protein NusB from Mycolicibacterium gilvum (strain PYR-GCK) (Mycobacterium gilvum (strain PYR-GCK)).